A 483-amino-acid chain; its full sequence is Membrane-bound lytic murein transglycosylase F (483 aa).

Residues 1-18 (MKGLVIRISVALALLLWA) form the signal peptide. The tract at residues 19–270 (VDMVFPWQQI…RIEEKYFSHI (252 aa)) is non-LT domain. The LT domain stretch occupies residues 272–483 (QFDYVDIKSY…IMITPQNSQD (212 aa)). Glutamate 315 is a catalytic residue.

This sequence in the N-terminal section; belongs to the bacterial solute-binding protein 3 family. In the C-terminal section; belongs to the transglycosylase Slt family.

The protein localises to the cell outer membrane. The catalysed reaction is Exolytic cleavage of the (1-&gt;4)-beta-glycosidic linkage between N-acetylmuramic acid (MurNAc) and N-acetylglucosamine (GlcNAc) residues in peptidoglycan, from either the reducing or the non-reducing ends of the peptidoglycan chains, with concomitant formation of a 1,6-anhydrobond in the MurNAc residue.. Murein-degrading enzyme that degrades murein glycan strands and insoluble, high-molecular weight murein sacculi, with the concomitant formation of a 1,6-anhydromuramoyl product. Lytic transglycosylases (LTs) play an integral role in the metabolism of the peptidoglycan (PG) sacculus. Their lytic action creates space within the PG sacculus to allow for its expansion as well as for the insertion of various structures such as secretion systems and flagella. This Actinobacillus succinogenes (strain ATCC 55618 / DSM 22257 / CCUG 43843 / 130Z) protein is Membrane-bound lytic murein transglycosylase F.